The primary structure comprises 354 residues: Uroporphyrinogen decarboxylase (354 aa).

Substrate is bound by residues 27–31, Asp-77, Tyr-154, Thr-209, and His-327; that span reads RQAGR.

This sequence belongs to the uroporphyrinogen decarboxylase family. As to quaternary structure, homodimer.

It localises to the cytoplasm. The catalysed reaction is uroporphyrinogen III + 4 H(+) = coproporphyrinogen III + 4 CO2. It functions in the pathway porphyrin-containing compound metabolism; protoporphyrin-IX biosynthesis; coproporphyrinogen-III from 5-aminolevulinate: step 4/4. Catalyzes the decarboxylation of four acetate groups of uroporphyrinogen-III to yield coproporphyrinogen-III. The sequence is that of Uroporphyrinogen decarboxylase from Actinobacillus succinogenes (strain ATCC 55618 / DSM 22257 / CCUG 43843 / 130Z).